We begin with the raw amino-acid sequence, 378 residues long: Ribosomal RNA large subunit methyltransferase G (378 aa).

Belongs to the methyltransferase superfamily. RlmG family.

The protein localises to the cytoplasm. It carries out the reaction guanosine(1835) in 23S rRNA + S-adenosyl-L-methionine = N(2)-methylguanosine(1835) in 23S rRNA + S-adenosyl-L-homocysteine + H(+). Its function is as follows. Specifically methylates the guanine in position 1835 (m2G1835) of 23S rRNA. This chain is Ribosomal RNA large subunit methyltransferase G, found in Salmonella arizonae (strain ATCC BAA-731 / CDC346-86 / RSK2980).